Reading from the N-terminus, the 498-residue chain is ADP,ATP carrier protein 1 (498 aa).

Residues 1–33 are Cytoplasmic-facing; sequence MSTSKSENYLSELRKIIWPIEQYENKKFLPLAF. Residues 34–54 form a helical membrane-spanning segment; it reads MMFCILLNYSTLRSIKDGFVV. Cys-37 and Cys-85 are disulfide-bonded. The Extracellular segment spans residues 55–67; the sequence is TDIGTESISFLKT. The chain crosses the membrane as a helical span at residues 68–88; sequence YIVLPSAVIAMIIYVKLCDIL. At 89–92 the chain is on the cytoplasmic side; sequence KQEN. A helical transmembrane segment spans residues 93–113; sequence VFYVITSFFLGYFALFAFVLY. Residues 114–147 are Extracellular-facing; it reads PYPDLVHPDHKTIESLSLAYPNFKWFIKIVGKWS. The helical transmembrane segment at 148–168 threads the bilayer; sequence FASFYTIAELWGTMMLSLLFW. Residues 169–184 are Cytoplasmic-facing; that stretch reads QFANQITKIAEAKRFY. A helical membrane pass occupies residues 185–205; sequence SMFGLLANLALPVTSVVIGYF. The Extracellular segment spans residues 206-218; it reads LHEKTQIVAEHLK. The chain crosses the membrane as a helical span at residues 219–239; it reads FVPLFVIMITSSFLIILTYRW. At 240–279 the chain is on the cytoplasmic side; sequence MNKNVLTDPRLYDPALVKEKKTKAKLSFIESLKMIFTSKY. Residues 280-300 traverse the membrane as a helical segment; it reads VGYIALLIIAYGVSVNLVEGV. Topologically, residues 301–320 are extracellular; that stretch reads WKSKVKELYPTKEAYTIYMG. The helical transmembrane segment at 321-341 threads the bilayer; it reads QFQFYQGWVAIAFMLIGSNIL. Residues 342–348 are Cytoplasmic-facing; it reads RKVSWLT. Residues 349-369 traverse the membrane as a helical segment; sequence AAMITPLMMFITGAAFFSFIF. Residues 370–379 are Extracellular-facing; it reads FDSVIAMNLT. A helical transmembrane segment spans residues 380-400; that stretch reads GILASSPLTLAVMIGMIQNVL. Residues 401–438 are Cytoplasmic-facing; it reads SKGVKYSLFDATKNMAYIPLDKDLRVKGQAAVEVIGGR. Position 436–442 (436–442) interacts with ATP; the sequence is GGRLGKS. Residues 439–459 form a helical membrane-spanning segment; the sequence is LGKSGGAIIQSTFFILFPVFG. The Extracellular portion of the chain corresponds to 460–465; it reads FIEATP. Residues 466 to 486 traverse the membrane as a helical segment; that stretch reads YFASIFFIIVILWIFAVKGLN. The Cytoplasmic segment spans residues 487–498; sequence KEYQVLVNKNEK.

This sequence belongs to the ADP/ATP translocase tlc family.

It is found in the cell membrane. In terms of biological role, provides the rickettsial cell with host ATP in exchange for rickettsial ADP. This is an obligate exchange system. This energy acquiring activity is an important component of rickettsial parasitism. The polypeptide is ADP,ATP carrier protein 1 (tlcA) (Rickettsia prowazekii (strain Madrid E)).